We begin with the raw amino-acid sequence, 291 residues long: Cytosolic Fe-S cluster assembly factor CFD1 (291 aa).

24 to 31 provides a ligand contact to ATP; the sequence is GKGGVGKS. [4Fe-4S] cluster is bound by residues C199 and C202. Residues 270–291 are disordered; sequence ENEEEAKETAEEEKSRAATNGQ. A compositionally biased stretch (basic and acidic residues) spans 276 to 285; that stretch reads KETAEEEKSR.

The protein belongs to the Mrp/NBP35 ATP-binding proteins family. NUBP2/CFD1 subfamily. As to quaternary structure, heterotetramer of 2 NBP35 and 2 CFD1 chains. Requires [4Fe-4S] cluster as cofactor.

The protein resides in the cytoplasm. Component of the cytosolic iron-sulfur (Fe/S) protein assembly (CIA) machinery. Required for maturation of extramitochondrial Fe-S proteins. The NBP35-CFD1 heterotetramer forms a Fe-S scaffold complex, mediating the de novo assembly of an Fe-S cluster and its transfer to target apoproteins. Required for biogenesis and export of both ribosomal subunits, which may reflect a role in assembly of the Fe/S clusters in RLI1, a protein which performs rRNA processing and ribosome export. This Yarrowia lipolytica (strain CLIB 122 / E 150) (Yeast) protein is Cytosolic Fe-S cluster assembly factor CFD1.